Here is a 145-residue protein sequence, read N- to C-terminus: Superoxide dismutase [Mn/Fe] (145 aa).

Positions 10 and 64 each coordinate Fe(3+). Mn(2+) contacts are provided by histidine 10 and histidine 64.

This sequence belongs to the iron/manganese superoxide dismutase family. Mn(2+) is required as a cofactor. The cofactor is Fe(3+).

It carries out the reaction 2 superoxide + 2 H(+) = H2O2 + O2. Destroys superoxide anion radicals which are normally produced within the cells and which are toxic to biological systems. Catalyzes the dismutation of superoxide anion radicals into O2 and H2O2 by successive reduction and oxidation of the transition metal ion at the active site. The chain is Superoxide dismutase [Mn/Fe] (sodA) from Streptococcus canis.